Reading from the N-terminus, the 175-residue chain is ATP synthase subunit b (175 aa).

A helical transmembrane segment spans residues 22–44; sequence MLVQLFFFLILLALLKKFAWGPL.

It belongs to the ATPase B chain family. In terms of assembly, F-type ATPases have 2 components, F(1) - the catalytic core - and F(0) - the membrane proton channel. F(1) has five subunits: alpha(3), beta(3), gamma(1), delta(1), epsilon(1). F(0) has three main subunits: a(1), b(2) and c(10-14). The alpha and beta chains form an alternating ring which encloses part of the gamma chain. F(1) is attached to F(0) by a central stalk formed by the gamma and epsilon chains, while a peripheral stalk is formed by the delta and b chains.

Its subcellular location is the cell membrane. In terms of biological role, f(1)F(0) ATP synthase produces ATP from ADP in the presence of a proton or sodium gradient. F-type ATPases consist of two structural domains, F(1) containing the extramembraneous catalytic core and F(0) containing the membrane proton channel, linked together by a central stalk and a peripheral stalk. During catalysis, ATP synthesis in the catalytic domain of F(1) is coupled via a rotary mechanism of the central stalk subunits to proton translocation. Its function is as follows. Component of the F(0) channel, it forms part of the peripheral stalk, linking F(1) to F(0). This Oceanobacillus iheyensis (strain DSM 14371 / CIP 107618 / JCM 11309 / KCTC 3954 / HTE831) protein is ATP synthase subunit b.